The following is a 501-amino-acid chain: Glycerol kinase (501 aa).

T17 serves as a coordination point for ADP. The ATP site is built by T17, T18, and S19. Residue T17 participates in sn-glycerol 3-phosphate binding. R21 serves as a coordination point for ADP. 4 residues coordinate sn-glycerol 3-phosphate: R87, E88, Y139, and D243. Glycerol is bound by residues R87, E88, Y139, D243, and Q244. 2 residues coordinate ADP: T265 and G308. Residues T265, G308, Q312, and G409 each coordinate ATP. G409 and N413 together coordinate ADP.

This sequence belongs to the FGGY kinase family.

The enzyme catalyses glycerol + ATP = sn-glycerol 3-phosphate + ADP + H(+). It functions in the pathway polyol metabolism; glycerol degradation via glycerol kinase pathway; sn-glycerol 3-phosphate from glycerol: step 1/1. Its activity is regulated as follows. Inhibited by fructose 1,6-bisphosphate (FBP). Key enzyme in the regulation of glycerol uptake and metabolism. Catalyzes the phosphorylation of glycerol to yield sn-glycerol 3-phosphate. This is Glycerol kinase from Pseudomonas syringae pv. tomato (strain ATCC BAA-871 / DC3000).